Here is a 280-residue protein sequence, read N- to C-terminus: 4-diphosphocytidyl-2-C-methyl-D-erythritol kinase (280 aa).

Lysine 8 is a catalytic residue. 91-101 provides a ligand contact to ATP; the sequence is PVSAGLAGGST. Aspartate 133 is an active-site residue.

This sequence belongs to the GHMP kinase family. IspE subfamily.

The catalysed reaction is 4-CDP-2-C-methyl-D-erythritol + ATP = 4-CDP-2-C-methyl-D-erythritol 2-phosphate + ADP + H(+). It functions in the pathway isoprenoid biosynthesis; isopentenyl diphosphate biosynthesis via DXP pathway; isopentenyl diphosphate from 1-deoxy-D-xylulose 5-phosphate: step 3/6. In terms of biological role, catalyzes the phosphorylation of the position 2 hydroxy group of 4-diphosphocytidyl-2C-methyl-D-erythritol. The sequence is that of 4-diphosphocytidyl-2-C-methyl-D-erythritol kinase from Clostridium beijerinckii (strain ATCC 51743 / NCIMB 8052) (Clostridium acetobutylicum).